The following is a 396-amino-acid chain: Elongation factor Tu (396 aa).

The 197-residue stretch at 10 to 206 folds into the tr-type G domain; it reads KPHCNIGTIG…AVDAYIPQPE (197 aa). Residues 19 to 26 form a G1 region; sequence GHVDHGKT. Residue 19-26 participates in GTP binding; sequence GHVDHGKT. Mg(2+) is bound at residue T26. The interval 60–64 is G2; sequence GITIS. The tract at residues 81–84 is G3; that stretch reads DCPG. GTP-binding positions include 81-85 and 136-139; these read DCPGH and NKVD. Positions 136–139 are G4; the sequence is NKVD. The G5 stretch occupies residues 174 to 176; sequence SAL.

The protein belongs to the TRAFAC class translation factor GTPase superfamily. Classic translation factor GTPase family. EF-Tu/EF-1A subfamily. In terms of assembly, monomer.

It is found in the cytoplasm. It catalyses the reaction GTP + H2O = GDP + phosphate + H(+). In terms of biological role, GTP hydrolase that promotes the GTP-dependent binding of aminoacyl-tRNA to the A-site of ribosomes during protein biosynthesis. The sequence is that of Elongation factor Tu from Parvibaculum lavamentivorans (strain DS-1 / DSM 13023 / NCIMB 13966).